Consider the following 1393-residue polypeptide: DNA-directed RNA polymerase subunit beta' (1393 aa).

Zn(2+)-binding residues include Cys70, Cys72, Cys85, and Cys88. Asp461, Asp463, and Asp465 together coordinate Mg(2+). Zn(2+) is bound by residues Cys815, Cys889, Cys896, and Cys899.

Belongs to the RNA polymerase beta' chain family. The RNAP catalytic core consists of 2 alpha, 1 beta, 1 beta' and 1 omega subunit. When a sigma factor is associated with the core the holoenzyme is formed, which can initiate transcription. Mg(2+) serves as cofactor. It depends on Zn(2+) as a cofactor.

The catalysed reaction is RNA(n) + a ribonucleoside 5'-triphosphate = RNA(n+1) + diphosphate. Its function is as follows. DNA-dependent RNA polymerase catalyzes the transcription of DNA into RNA using the four ribonucleoside triphosphates as substrates. In Vesicomyosocius okutanii subsp. Calyptogena okutanii (strain HA), this protein is DNA-directed RNA polymerase subunit beta'.